A 219-amino-acid polypeptide reads, in one-letter code: Cytochrome b6 (219 aa).

A helical transmembrane segment spans residues 32-52 (IFYCFGGIVLTCFIIQAATGF). Cys-35 is a heme c binding site. The heme b site is built by His-86 and His-100. 3 consecutive transmembrane segments (helical) span residues 90–110 (SGLM…TAGF), 116–136 (LTWI…VTGY), and 190–210 (AHTF…FLMI). Residues His-191 and His-206 each coordinate heme b.

It belongs to the cytochrome b family. PetB subfamily. In terms of assembly, the 4 large subunits of the cytochrome b6-f complex are cytochrome b6, subunit IV (17 kDa polypeptide, PetD), cytochrome f and the Rieske protein, while the 4 small subunits are PetG, PetL, PetM and PetN. The complex functions as a dimer. Heme b serves as cofactor. Heme c is required as a cofactor.

The protein resides in the plastid. The protein localises to the chloroplast thylakoid membrane. In terms of biological role, component of the cytochrome b6-f complex, which mediates electron transfer between photosystem II (PSII) and photosystem I (PSI), cyclic electron flow around PSI, and state transitions. This Amphidinium operculatum (Dinoflagellate) protein is Cytochrome b6.